The primary structure comprises 310 residues: Signal peptidase I (310 aa).

The chain crosses the membrane as a helical span at residues 5–25 (LSSFLLASSLITGTLWIINKI). The Cytoplasmic segment spans residues 26–57 (LSHNLLDSKIPFNIKKSKIYYKSKQVVQTFAS). The chain crosses the membrane as a helical span at residues 58–78 (FFPILIIVFIIRTFICEPFQI). The Extracellular portion of the chain corresponds to 79–310 (PSESMMPTLL…IQFDRIGNIY (232 aa)). Residues S82 and K137 contribute to the active site.

This sequence belongs to the peptidase S26 family.

The protein resides in the cell membrane. It catalyses the reaction Cleavage of hydrophobic, N-terminal signal or leader sequences from secreted and periplasmic proteins.. In Buchnera aphidicola subsp. Baizongia pistaciae (strain Bp), this protein is Signal peptidase I (lepB).